The primary structure comprises 122 residues: ATP synthase epsilon chain (122 aa).

Residues 97–112 (EDLKSERELTRSRGDA) are compositionally biased toward basic and acidic residues. The interval 97–122 (EDLKSERELTRSRGDAALRATRRLNS) is disordered.

This sequence belongs to the ATPase epsilon chain family. As to quaternary structure, F-type ATPases have 2 components, CF(1) - the catalytic core - and CF(0) - the membrane proton channel. CF(1) has five subunits: alpha(3), beta(3), gamma(1), delta(1), epsilon(1). CF(0) has three main subunits: a, b and c.

It is found in the cell membrane. Its function is as follows. Produces ATP from ADP in the presence of a proton gradient across the membrane. The sequence is that of ATP synthase epsilon chain from Corynebacterium aurimucosum (strain ATCC 700975 / DSM 44827 / CIP 107346 / CN-1) (Corynebacterium nigricans).